Here is a 153-residue protein sequence, read N- to C-terminus: Cystatin-9 (153 aa).

The signal sequence occupies residues 1–27 (MGRQRRCRWAQPWTLLLLLLGPRLLVT).

The protein belongs to the cystatin family.

It localises to the secreted. In terms of biological role, may play a role in hematopoietic differentiation or inflammation. This is Cystatin-9 (CST9) from Bos taurus (Bovine).